Reading from the N-terminus, the 835-residue chain is Peptide transporter family 1 (835 aa).

11 consecutive transmembrane segments (helical) span residues 86 to 106, 113 to 133, 150 to 170, 183 to 203, 222 to 242, 325 to 345, 368 to 388, 401 to 421, 697 to 717, 738 to 758, and 765 to 785; these read IFFN…SIVA, FWTI…LALA, GLLI…AFGG, LFFS…TFIS, FGIP…GSFW, MFLP…VWLI, LNAV…YPVA, VTGG…QLQV, ILWQ…FSIT, WLLT…LNLF, and FFVY…LSIF. The tract at residues 814–835 is disordered; it reads PRYSIDNKGFHPDEKDTFDMHF. Over residues 821-835 the composition is skewed to basic and acidic residues; it reads KGFHPDEKDTFDMHF.

Belongs to the major facilitator superfamily. Proton-dependent oligopeptide transporter (POT/PTR) (TC 2.A.17) family. Expressed specifically in the intestine.

The protein localises to the apical cell membrane. In terms of biological role, low-affinity peptide transporter that is necessary for proton-dependent uptake of di- or tripeptides, and to a minor extent tetrapeptides, in the intestine. Transport is independent of sodium and chloride ions. Controls the uptake of dietary fatty acids, plays a role in fatty acid synthesis and is responsible for dipeptide-induced acidification of the intestine. Regulates cellular pH differences together with the antiporter protein, nhx-2. Amino acid uptake and absorption levels influence the insulin signaling/daf-2 and let-363/TOR pathways, subsequently affecting the stress response and longevity of the organism. It is required for the uptake of the L-enantiomers of various amino acids, including L-glutamate. In response to the availability of amino acid nutrients, may play a role in promoting reproduction and fertility. The chain is Peptide transporter family 1 from Caenorhabditis elegans.